The chain runs to 576 residues: Arginine--tRNA ligase (576 aa).

Residues 122-132 (PNVAKQMHVGH) carry the 'HIGH' region motif.

Belongs to the class-I aminoacyl-tRNA synthetase family. As to quaternary structure, monomer.

Its subcellular location is the cytoplasm. It catalyses the reaction tRNA(Arg) + L-arginine + ATP = L-arginyl-tRNA(Arg) + AMP + diphosphate. This chain is Arginine--tRNA ligase, found in Yersinia pseudotuberculosis serotype O:1b (strain IP 31758).